A 142-amino-acid chain; its full sequence is UPF0102 protein Bcep18194_A3391 (142 aa).

Positions 1 to 27 are disordered; it reads MCHAAPARPGDGRGLPRAGDNFSGAAR.

The protein belongs to the UPF0102 family.

This is UPF0102 protein Bcep18194_A3391 from Burkholderia lata (strain ATCC 17760 / DSM 23089 / LMG 22485 / NCIMB 9086 / R18194 / 383).